We begin with the raw amino-acid sequence, 568 residues long: Potassium-transporting ATPase potassium-binding subunit (568 aa).

The next 12 membrane-spanning stretches (helical) occupy residues I7–L27, H65–L85, G136–I156, L179–P199, L254–F274, W285–A305, F332–V352, A354–G374, I377–F397, M423–V443, I487–I507, and L530–A550.

It belongs to the KdpA family. The system is composed of three essential subunits: KdpA, KdpB and KdpC.

It localises to the cell inner membrane. Part of the high-affinity ATP-driven potassium transport (or Kdp) system, which catalyzes the hydrolysis of ATP coupled with the electrogenic transport of potassium into the cytoplasm. This subunit binds the periplasmic potassium ions and delivers the ions to the membrane domain of KdpB through an intramembrane tunnel. This chain is Potassium-transporting ATPase potassium-binding subunit, found in Granulibacter bethesdensis (strain ATCC BAA-1260 / CGDNIH1).